The sequence spans 201 residues: dTTP/UTP pyrophosphatase (201 aa).

Asp73 (proton acceptor) is an active-site residue.

It belongs to the Maf family. YhdE subfamily. The cofactor is a divalent metal cation.

The protein resides in the cytoplasm. It catalyses the reaction dTTP + H2O = dTMP + diphosphate + H(+). The catalysed reaction is UTP + H2O = UMP + diphosphate + H(+). Nucleoside triphosphate pyrophosphatase that hydrolyzes dTTP and UTP. May have a dual role in cell division arrest and in preventing the incorporation of modified nucleotides into cellular nucleic acids. The sequence is that of dTTP/UTP pyrophosphatase from Pseudomonas aeruginosa (strain ATCC 15692 / DSM 22644 / CIP 104116 / JCM 14847 / LMG 12228 / 1C / PRS 101 / PAO1).